A 101-amino-acid chain; its full sequence is RNA-binding protein Hfq (101 aa).

A Sm domain is found at 9 to 68 (DPYLNALRRERIPVSIYLVNGIKLQGQIESFDQFIILLKNTVSQMVYKHAISTVVPARSI). The tract at residues 68-91 (ISHNNNGSSQAQAPQQAVQTTQPV) is disordered. The segment covering 77-91 (QAQAPQQAVQTTQPV) has biased composition (low complexity).

This sequence belongs to the Hfq family. As to quaternary structure, homohexamer.

Its function is as follows. RNA chaperone that binds small regulatory RNA (sRNAs) and mRNAs to facilitate mRNA translational regulation in response to envelope stress, environmental stress and changes in metabolite concentrations. Also binds with high specificity to tRNAs. The protein is RNA-binding protein Hfq of Haemophilus ducreyi (strain 35000HP / ATCC 700724).